The primary structure comprises 1181 residues: Integrin alpha-2 (1181 aa).

The N-terminal stretch at 1 to 29 (MGPERTGAAPLPLLLVLALSQGILNCCLA) is a signal peptide. The Extracellular portion of the chain corresponds to 30–1132 (YNVGLPEAKI…KPDEKAEVPT (1103 aa)). FG-GAP repeat units lie at residues 34–92 (LPEA…TATC) and 101–161 (TSIP…LSAS). Cysteine 83 and cysteine 92 are disulfide-bonded. N-linked (GlcNAc...) asparagine glycans are attached at residues asparagine 105, asparagine 112, and asparagine 343. The VWFA domain maps to 188 to 365 (WDAVKNFLEK…TLGEQIFSIE (178 aa)). FG-GAP repeat units follow at residues 366–420 (GTVQ…LIFP), 423–475 (AFDQ…ENGN), 477–539 (TVIQ…ILGQ), 540–598 (HQFL…TIRT), and 602–664 (QKIL…FTPE). Residues asparagine 432, asparagine 460, and asparagine 475 are each glycosylated (N-linked (GlcNAc...) asparagine). Residues aspartate 499, aspartate 501, aspartate 503, aspartate 507, aspartate 563, asparagine 565, aspartate 567, aspartate 571, aspartate 627, asparagine 629, aspartate 631, and aspartate 635 each coordinate Ca(2+). 5 disulfide bridges follow: cysteine 680-cysteine 737, cysteine 789-cysteine 795, cysteine 865-cysteine 876, cysteine 1019-cysteine 1050, and cysteine 1055-cysteine 1060. Asparagine 699 carries an N-linked (GlcNAc...) asparagine glycan. 3 N-linked (GlcNAc...) asparagine glycosylation sites follow: asparagine 1057, asparagine 1074, and asparagine 1081. A helical membrane pass occupies residues 1133-1154 (GVIIGSIIAGILLLLALVAILW). Residues 1155–1161 (KLGFFKR) form an interaction with HPS5 region. Residues 1155 to 1181 (KLGFFKRKYEKMTKNPDEIDETTELSS) are Cytoplasmic-facing. The GFFKR motif motif lies at 1157–1161 (GFFKR).

Belongs to the integrin alpha chain family. In terms of assembly, heterodimer of an alpha and a beta subunit. Alpha-2 associates with beta-1. Interacts with HPS5 and RAB21. (Microbial infection) Integrin ITGA2:ITGB1 interacts (via ITAG2 I-domain) with rotavirus A VP4 protein. As to quaternary structure, (Microbial infection) Integrin ITGA2:ITGB1 interacts with human echoviruses 1 and 8 capsid proteins.

Its subcellular location is the membrane. Integrin alpha-2/beta-1 is a receptor for laminin, collagen, collagen C-propeptides, fibronectin and E-cadherin. It recognizes the proline-hydroxylated sequence G-F-P-G-E-R in collagen. It is responsible for adhesion of platelets and other cells to collagens, modulation of collagen and collagenase gene expression, force generation and organization of newly synthesized extracellular matrix. In terms of biological role, (Microbial infection) Integrin ITGA2:ITGB1 acts as a receptor for Human rotavirus A. Its function is as follows. (Microbial infection) Integrin ITGA2:ITGB1 acts as a receptor for Human echoviruses 1 and 8. The protein is Integrin alpha-2 (ITGA2) of Homo sapiens (Human).